The chain runs to 144 residues: MLSIQEIMALIPHRYPFLLVDRIVELEPGVRAVGEKLVSANEPYFQGHFPGNPIMPGVLILEALAQTGAVAALSLPEHAGKLVLFAGIDGARFKRVVRPGDTLRLEVQLERMRRGIGKGQARATVADQLACEAELLFAVTDPTK.

Histidine 48 is an active-site residue.

Belongs to the thioester dehydratase family. FabZ subfamily.

The protein resides in the cytoplasm. The enzyme catalyses a (3R)-hydroxyacyl-[ACP] = a (2E)-enoyl-[ACP] + H2O. Involved in unsaturated fatty acids biosynthesis. Catalyzes the dehydration of short chain beta-hydroxyacyl-ACPs and long chain saturated and unsaturated beta-hydroxyacyl-ACPs. This is 3-hydroxyacyl-[acyl-carrier-protein] dehydratase FabZ from Chloroflexus aggregans (strain MD-66 / DSM 9485).